The following is a 589-amino-acid chain: Cyclohexane-1,2-dione hydrolase (589 aa).

Glutamate 52 serves as a coordination point for thiamine diphosphate. Residues 400–480 (NHTLPMFGGA…VITMVFTNES (81 aa)) form a thiamine pyrophosphate binding region. Positions 451 and 478 each coordinate Mg(2+).

Belongs to the TPP enzyme family. As to quaternary structure, homodimer. It depends on Mg(2+) as a cofactor. Thiamine diphosphate serves as cofactor. FAD is required as a cofactor.

The catalysed reaction is cyclohexan-1,2-dione + H2O = 6-oxohexanoate + H(+). In terms of biological role, catalyzes the ring-opening cleavage of the alicyclic alcohol cyclohexane-1,2-dione. The polypeptide is Cyclohexane-1,2-dione hydrolase (Azoarcus sp).